A 149-amino-acid chain; its full sequence is Small ribosomal subunit protein bS6 (149 aa).

Residues 94–149 are disordered; the sequence is EKHEEGPSAMMQKRDRDDRPRRDGDRPDRGGFGDRGPRPDRGDRDDRPRRPREDRA.

It belongs to the bacterial ribosomal protein bS6 family.

Its function is as follows. Binds together with bS18 to 16S ribosomal RNA. This is Small ribosomal subunit protein bS6 from Sinorhizobium fredii (strain NBRC 101917 / NGR234).